The following is a 293-amino-acid chain: DDRGK domain-containing protein 1 (293 aa).

The Lumenal segment spans residues 1–6; it reads MWGPLI. The helical transmembrane segment at 7 to 27 threads the bilayer; the sequence is YALLGLAIVAAAFLFVRRSQA. Topologically, residues 28–293 are cytoplasmic; the sequence is KEVVPVADDD…PADVDETTTA (266 aa). Disordered regions lie at residues 30-151 and 273-293; these read VVPV…RQKE and TDVE…TTTA. Composition is skewed to basic and acidic residues over residues 90–126 and 133–151; these read KLQE…KERE and ERQR…RQKE.

It belongs to the DDRGK1 family.

Its subcellular location is the endoplasmic reticulum membrane. Its function is as follows. Substrate adapter for ufmylation, the covalent attachment of the ubiquitin-like modifier UFM1 to substrate proteins. The sequence is that of DDRGK domain-containing protein 1 from Monosiga brevicollis (Choanoflagellate).